The primary structure comprises 549 residues: Cation/acetate symporter ActP (549 aa).

13 helical membrane passes run 33-53, 77-97, 103-123, 148-168, 183-203, 206-226, 262-282, 303-323, 355-375, 404-424, 428-448, 464-484, and 493-513; these read WQAI…TYWA, LAIA…ALVF, GLIY…LIAE, ILSA…QMVG, IAVV…GMLA, WVQI…AFMV, ISAL…PHIL, GFMG…IMLV, LFLG…VAGL, VSKI…VLFE, IAFM…PIIL, GGWL…TIWV, and IFPY…GIWF.

This sequence belongs to the sodium:solute symporter (SSF) (TC 2.A.21) family.

The protein resides in the cell inner membrane. In terms of biological role, transports acetate. The chain is Cation/acetate symporter ActP from Escherichia coli O6:K15:H31 (strain 536 / UPEC).